Reading from the N-terminus, the 97-residue chain is Putative pterin-4-alpha-carbinolamine dehydratase (97 aa).

The protein belongs to the pterin-4-alpha-carbinolamine dehydratase family.

It carries out the reaction (4aS,6R)-4a-hydroxy-L-erythro-5,6,7,8-tetrahydrobiopterin = (6R)-L-erythro-6,7-dihydrobiopterin + H2O. In Cyanothece sp. (strain PCC 7425 / ATCC 29141), this protein is Putative pterin-4-alpha-carbinolamine dehydratase.